The chain runs to 372 residues: Flagellar P-ring protein (372 aa).

The N-terminal stretch at 1 to 26 (MNLSSLSFRLLATLLGACVVVAPASA) is a signal peptide.

This sequence belongs to the FlgI family. As to quaternary structure, the basal body constitutes a major portion of the flagellar organelle and consists of four rings (L,P,S, and M) mounted on a central rod.

It localises to the periplasm. The protein resides in the bacterial flagellum basal body. Assembles around the rod to form the L-ring and probably protects the motor/basal body from shearing forces during rotation. This is Flagellar P-ring protein from Xanthomonas oryzae pv. oryzae (strain MAFF 311018).